Here is a 75-residue protein sequence, read N- to C-terminus: Defensin J1-1 (75 aa).

A signal peptide spans methionine 1–alanine 27. Disulfide bonds link cysteine 30–cysteine 74, cysteine 41–cysteine 61, cysteine 47–cysteine 68, and cysteine 51–cysteine 70.

The protein belongs to the DEFL family. As to quaternary structure, monomer. In terms of tissue distribution, expressed in orange and red ripe fruit and to a lesser extent in mature, green fruit. Present in trace in young, green fruit.

It localises to the secreted. Plant defense peptide with antifungal activity against F.oxysporum and B.cinerea. The protein is Defensin J1-1 of Capsicum annuum (Capsicum pepper).